The following is a 554-amino-acid chain: Hydroxylamine reductase (554 aa).

Residues Cys3, Cys6, Cys18, and Cys25 each coordinate [2Fe-2S] cluster. Residues His252, Glu276, Cys320, Cys408, Cys436, Cys461, Glu495, and Lys497 each contribute to the hybrid [4Fe-2O-2S] cluster site. Cysteine persulfide is present on Cys408.

It belongs to the HCP family. [2Fe-2S] cluster is required as a cofactor. Requires hybrid [4Fe-2O-2S] cluster as cofactor.

Its subcellular location is the cytoplasm. It catalyses the reaction A + NH4(+) + H2O = hydroxylamine + AH2 + H(+). Its function is as follows. Catalyzes the reduction of hydroxylamine to form NH(3) and H(2)O. This is Hydroxylamine reductase from Shewanella amazonensis (strain ATCC BAA-1098 / SB2B).